The chain runs to 61 residues: UPF0181 protein MS1074 (61 aa).

Belongs to the UPF0181 family.

The protein is UPF0181 protein MS1074 of Mannheimia succiniciproducens (strain KCTC 0769BP / MBEL55E).